Consider the following 127-residue polypeptide: Ribosome-binding factor A (127 aa).

Belongs to the RbfA family. Monomer. Binds 30S ribosomal subunits, but not 50S ribosomal subunits or 70S ribosomes.

It is found in the cytoplasm. In terms of biological role, one of several proteins that assist in the late maturation steps of the functional core of the 30S ribosomal subunit. Associates with free 30S ribosomal subunits (but not with 30S subunits that are part of 70S ribosomes or polysomes). Required for efficient processing of 16S rRNA. May interact with the 5'-terminal helix region of 16S rRNA. The protein is Ribosome-binding factor A of Chloroflexus aurantiacus (strain ATCC 29366 / DSM 635 / J-10-fl).